A 207-amino-acid chain; its full sequence is Large ribosomal subunit protein uL4 (207 aa).

Residues 47 to 77 (GTADTKTRAEVSGGGRKPWRQKGTGRARHGS) form a disordered region. Residues 63-77 (KPWRQKGTGRARHGS) are compositionally biased toward basic residues.

This sequence belongs to the universal ribosomal protein uL4 family. Part of the 50S ribosomal subunit.

In terms of biological role, one of the primary rRNA binding proteins, this protein initially binds near the 5'-end of the 23S rRNA. It is important during the early stages of 50S assembly. It makes multiple contacts with different domains of the 23S rRNA in the assembled 50S subunit and ribosome. Forms part of the polypeptide exit tunnel. In Symbiobacterium thermophilum (strain DSM 24528 / JCM 14929 / IAM 14863 / T), this protein is Large ribosomal subunit protein uL4.